Here is a 712-residue protein sequence, read N- to C-terminus: Probable serine/threonine-protein kinase fhkE (712 aa).

The FHA domain occupies 46-100 (ITFGRLKDSTVHYNDKSISGSHCKITRESNDDDGVVIAFIYDNSTNGTFIDNIKV). Residues 145-411 (YFIGEMLGQG…CNNIIQHPWF (267 aa)) form the Protein kinase domain. Residues 151 to 159 (LGQGNFATV) and K174 each bind ATP. The Proton acceptor role is filled by D270. The stretch at 414 to 442 (NVKLSTLLEEDERLRKKAEAEVEANNNNT) forms a coiled coil. A disordered region spans residues 431–695 (AEAEVEANNN…KCQYDPNCYR (265 aa)). Low complexity-rich tracts occupy residues 436–446 (EANNNNTNKSN), 459–481 (GNCS…IKSN), 514–571 (NNDN…SNDT), 595–605 (NLQNHLNNNKI), and 616–639 (NNNN…NNNN). A compositionally biased stretch (polar residues) spans 669–678 (PQNSSNNNSG).

It belongs to the protein kinase superfamily. CAMK Ser/Thr protein kinase family. CHK2 subfamily.

It catalyses the reaction L-seryl-[protein] + ATP = O-phospho-L-seryl-[protein] + ADP + H(+). It carries out the reaction L-threonyl-[protein] + ATP = O-phospho-L-threonyl-[protein] + ADP + H(+). This chain is Probable serine/threonine-protein kinase fhkE (fhkE), found in Dictyostelium discoideum (Social amoeba).